Consider the following 468-residue polypeptide: Mitochondrial adenyl nucleotide antiporter SLC25A23 (468 aa).

A regulatory N-terminal domain region spans residues Met-1 to Asn-149. Residues Met-1–Gln-188 lie on the Mitochondrial intermembrane side of the membrane. In terms of domain architecture, EF-hand 1 spans Glu-9 to Gly-44. Asp-22, Asn-24, Asp-26, Arg-28, and Glu-33 together coordinate Ca(2+). The disordered stretch occupies residues Leu-34–Asp-67. The segment covering Gly-58–Asp-67 has biased composition (acidic residues). EF-hand domains follow at residues Glu-77–Ser-112 and Ile-113–Glu-148. Ca(2+) is bound by residues Asp-90, Asn-92, Asp-94, His-96, and Glu-101. The linker region stretch occupies residues Val-150–His-159. Positions Ile-165–Arg-468 are C-terminal transmembrane transporter domain. Solcar repeat units lie at residues Gly-183 to Ala-269, Leu-277 to Trp-362, and Pro-374 to Ala-462. A helical membrane pass occupies residues Leu-189–Leu-206. Residues Asp-207–Arg-243 are Mitochondrial matrix-facing. A helical transmembrane segment spans residues Gly-244–Tyr-263. At Glu-264–Gly-286 the chain is on the mitochondrial intermembrane side. The helical transmembrane segment at Ser-287–Met-300 threads the bilayer. Topologically, residues Glu-301–Arg-336 are mitochondrial matrix. The chain crosses the membrane as a helical span at residues Gly-337–Tyr-356. Residues Glu-357–Leu-379 lie on the Mitochondrial intermembrane side of the membrane. Residues Leu-380–Leu-397 traverse the membrane as a helical segment. The Mitochondrial matrix portion of the chain corresponds to Ala-398–Arg-436. The chain crosses the membrane as a helical span at residues Gly-437 to Tyr-456. Residues Glu-457–Arg-468 are Mitochondrial intermembrane-facing.

The protein belongs to the mitochondrial carrier (TC 2.A.29) family. Interacts with MCU. Interacts with MICU1. As to expression, expressed at low levels in most tissues examined, with highest expression in brain, skeletal muscle and pancreas.

It is found in the mitochondrion inner membrane. It catalyses the reaction Mg(2+)(out) + phosphate(in) + ATP(out) = Mg(2+)(in) + phosphate(out) + ATP(in). The catalysed reaction is ADP(out) + phosphate(in) + H(+)(out) = ADP(in) + phosphate(out) + H(+)(in). It carries out the reaction AMP(out) + phosphate(in) = AMP(in) + phosphate(out). The enzyme catalyses phosphate(in) + ATP(out) + 2 H(+)(out) = phosphate(out) + ATP(in) + 2 H(+)(in). It catalyses the reaction dADP(in) + ADP(out) = dADP(out) + ADP(in). The catalysed reaction is Mg(2+)(in) + ADP(out) + ATP(in) + H(+)(out) = Mg(2+)(out) + ADP(in) + ATP(out) + H(+)(in). It carries out the reaction ADP(out) + diphosphate(in) = ADP(in) + diphosphate(out). The enzyme catalyses dAMP(in) + ADP(out) + H(+)(out) = dAMP(out) + ADP(in) + H(+)(in). It catalyses the reaction 3'-AMP(in) + ADP(out) + H(+)(out) = 3'-AMP(out) + ADP(in) + H(+)(in). The catalysed reaction is dAMP(out) + phosphate(in) = dAMP(in) + phosphate(out). It carries out the reaction 3'-AMP(out) + phosphate(in) = 3'-AMP(in) + phosphate(out). The enzyme catalyses dADP(out) + phosphate(in) + H(+)(out) = dADP(in) + phosphate(out) + H(+)(in). With respect to regulation, activated by an increase in cytosolic calcium levels that induce a conformational change of the N-terminal regulatory domain, uncapping the channel and allowing transport. Inhibited by bathophenanthroline, mersalyl, p-hydroxymercuribenzoate, bromcresol purple, tannic acid, pyridoxal 5'-phosphate and p-hydroxymercuribenzoate. In terms of biological role, electroneutral antiporter that mediates the transport of adenine nucleotides through the inner mitochondrial membrane. Originally identified as an ATP-magnesium/inorganic phosphate antiporter, it also acts as a broad specificity adenyl nucleotide antiporter. By regulating the mitochondrial matrix adenine nucleotide pool could adapt to changing cellular energetic demands and indirectly regulate adenine nucleotide-dependent metabolic pathways. Also acts as a regulator of mitochondrial calcium uptake and can probably transport trace amounts of other divalent metal cations in complex with ATP. In vitro, a low activity is also observed with guanyl and pyrimidine nucleotides. The sequence is that of Mitochondrial adenyl nucleotide antiporter SLC25A23 from Homo sapiens (Human).